The primary structure comprises 628 residues: Carbon monoxide dehydrogenase 1 (628 aa).

Positions 44, 52, 53, 56, 61, and 75 each coordinate [4Fe-4S] cluster. 6 residues coordinate [Ni-4Fe-5S] cluster: histidine 266, cysteine 302, cysteine 340, cysteine 448, cysteine 478, and cysteine 519.

This sequence belongs to the Ni-containing carbon monoxide dehydrogenase family. In terms of assembly, homodimer. [4Fe-4S] cluster serves as cofactor. The cofactor is [Ni-4Fe-5S] cluster.

It catalyses the reaction CO + 2 oxidized [2Fe-2S]-[ferredoxin] + H2O = 2 reduced [2Fe-2S]-[ferredoxin] + CO2 + 2 H(+). In terms of biological role, CODH oxidizes carbon monoxide coupled, via CooF, to the reduction of a hydrogen cation by a hydrogenase (possibly CooH). In Methanosarcina mazei (strain ATCC BAA-159 / DSM 3647 / Goe1 / Go1 / JCM 11833 / OCM 88) (Methanosarcina frisia), this protein is Carbon monoxide dehydrogenase 1 (cooS1).